Reading from the N-terminus, the 271-residue chain is Tryptophan synthase alpha chain (271 aa).

Catalysis depends on proton acceptor residues Glu49 and Asp60.

It belongs to the TrpA family. In terms of assembly, tetramer of two alpha and two beta chains.

It carries out the reaction (1S,2R)-1-C-(indol-3-yl)glycerol 3-phosphate + L-serine = D-glyceraldehyde 3-phosphate + L-tryptophan + H2O. It functions in the pathway amino-acid biosynthesis; L-tryptophan biosynthesis; L-tryptophan from chorismate: step 5/5. Functionally, the alpha subunit is responsible for the aldol cleavage of indoleglycerol phosphate to indole and glyceraldehyde 3-phosphate. In Burkholderia pseudomallei (strain 1106a), this protein is Tryptophan synthase alpha chain.